Reading from the N-terminus, the 245-residue chain is Malonyl-[acyl-carrier protein] O-methyltransferase (245 aa).

This sequence belongs to the methyltransferase superfamily.

It catalyses the reaction malonyl-[ACP] + S-adenosyl-L-methionine = malonyl-[ACP] methyl ester + S-adenosyl-L-homocysteine. It participates in cofactor biosynthesis; biotin biosynthesis. Converts the free carboxyl group of a malonyl-thioester to its methyl ester by transfer of a methyl group from S-adenosyl-L-methionine (SAM). It allows to synthesize pimeloyl-ACP via the fatty acid synthetic pathway. The polypeptide is Malonyl-[acyl-carrier protein] O-methyltransferase (Calditerrivibrio nitroreducens (strain DSM 19672 / NBRC 101217 / Yu37-1)).